Reading from the N-terminus, the 198-residue chain is Large ribosomal subunit protein uL5 (198 aa).

Belongs to the universal ribosomal protein uL5 family. Part of the 50S ribosomal subunit; part of the 5S rRNA/L5/L18/L25 subcomplex. Contacts the 5S rRNA and the P site tRNA. Forms a bridge to the 30S subunit in the 70S ribosome.

Its function is as follows. This is one of the proteins that bind and probably mediate the attachment of the 5S RNA into the large ribosomal subunit, where it forms part of the central protuberance. In the 70S ribosome it contacts protein S13 of the 30S subunit (bridge B1b), connecting the 2 subunits; this bridge is implicated in subunit movement. Contacts the P site tRNA; the 5S rRNA and some of its associated proteins might help stabilize positioning of ribosome-bound tRNAs. The polypeptide is Large ribosomal subunit protein uL5 (Chlorobium phaeovibrioides (strain DSM 265 / 1930) (Prosthecochloris vibrioformis (strain DSM 265))).